A 307-amino-acid polypeptide reads, in one-letter code: MRKIILCSPRGFCAGVIRAIQTVEVALEKWGRPIYVKHEIVHNRHVVDKLREKGAIFIEDLQEVPRNSRVIFSAHGVPPSLREEATERGLIAIDATCGLVTKVHSAVKMYAKKGYHIILIGKRKHVEIIGIRGEAPDQITVVENIAEVEALPFSAQDPLFYVTQTTLSMDDAADIVAALKARYPRIFTLPSSSICYATQNRQGALRNILPQVDFVYVIGDRQSSNSNRLREVAERRGVTARLVNHPDEVTEEILQYSGNIGITAGASTPEDVVQACLMKLQELIPDLSIEMDLFVEEDTVFQLPKEL.

Residue cysteine 13 participates in [4Fe-4S] cluster binding. The (2E)-4-hydroxy-3-methylbut-2-enyl diphosphate site is built by histidine 42 and histidine 75. Dimethylallyl diphosphate-binding residues include histidine 42 and histidine 75. The isopentenyl diphosphate site is built by histidine 42 and histidine 75. Cysteine 97 lines the [4Fe-4S] cluster pocket. Histidine 125 serves as a coordination point for (2E)-4-hydroxy-3-methylbut-2-enyl diphosphate. Histidine 125 provides a ligand contact to dimethylallyl diphosphate. Residue histidine 125 coordinates isopentenyl diphosphate. Glutamate 127 functions as the Proton donor in the catalytic mechanism. Threonine 165 provides a ligand contact to (2E)-4-hydroxy-3-methylbut-2-enyl diphosphate. Cysteine 195 lines the [4Fe-4S] cluster pocket. (2E)-4-hydroxy-3-methylbut-2-enyl diphosphate contacts are provided by serine 223, serine 224, asparagine 225, and serine 267. The dimethylallyl diphosphate site is built by serine 223, serine 224, asparagine 225, and serine 267. Serine 223, serine 224, asparagine 225, and serine 267 together coordinate isopentenyl diphosphate.

Belongs to the IspH family. It depends on [4Fe-4S] cluster as a cofactor.

The catalysed reaction is isopentenyl diphosphate + 2 oxidized [2Fe-2S]-[ferredoxin] + H2O = (2E)-4-hydroxy-3-methylbut-2-enyl diphosphate + 2 reduced [2Fe-2S]-[ferredoxin] + 2 H(+). It carries out the reaction dimethylallyl diphosphate + 2 oxidized [2Fe-2S]-[ferredoxin] + H2O = (2E)-4-hydroxy-3-methylbut-2-enyl diphosphate + 2 reduced [2Fe-2S]-[ferredoxin] + 2 H(+). The protein operates within isoprenoid biosynthesis; dimethylallyl diphosphate biosynthesis; dimethylallyl diphosphate from (2E)-4-hydroxy-3-methylbutenyl diphosphate: step 1/1. It functions in the pathway isoprenoid biosynthesis; isopentenyl diphosphate biosynthesis via DXP pathway; isopentenyl diphosphate from 1-deoxy-D-xylulose 5-phosphate: step 6/6. Catalyzes the conversion of 1-hydroxy-2-methyl-2-(E)-butenyl 4-diphosphate (HMBPP) into a mixture of isopentenyl diphosphate (IPP) and dimethylallyl diphosphate (DMAPP). Acts in the terminal step of the DOXP/MEP pathway for isoprenoid precursor biosynthesis. This is 4-hydroxy-3-methylbut-2-enyl diphosphate reductase from Chlamydia trachomatis serovar L2 (strain ATCC VR-902B / DSM 19102 / 434/Bu).